A 423-amino-acid polypeptide reads, in one-letter code: Glutamate-1-semialdehyde 2,1-aminomutase (423 aa).

At lysine 266 the chain carries N6-(pyridoxal phosphate)lysine.

It belongs to the class-III pyridoxal-phosphate-dependent aminotransferase family. HemL subfamily. As to quaternary structure, homodimer. Requires pyridoxal 5'-phosphate as cofactor.

It localises to the cytoplasm. The enzyme catalyses (S)-4-amino-5-oxopentanoate = 5-aminolevulinate. The protein operates within porphyrin-containing compound metabolism; protoporphyrin-IX biosynthesis; 5-aminolevulinate from L-glutamyl-tRNA(Glu): step 2/2. This Nitratidesulfovibrio vulgaris (strain DP4) (Desulfovibrio vulgaris) protein is Glutamate-1-semialdehyde 2,1-aminomutase.